A 330-amino-acid polypeptide reads, in one-letter code: GTPase Obg (330 aa).

Residues Met1–Leu159 enclose the Obg domain. One can recognise an OBG-type G domain in the interval Ser160 to Lys327. Residues Gly166 to Ser173, Phe191 to Val195, Asp212 to Gly215, Asn279 to Asp282, and Ser308 to Tyr310 each bind GTP. Mg(2+) contacts are provided by Ser173 and Thr193.

It belongs to the TRAFAC class OBG-HflX-like GTPase superfamily. OBG GTPase family. As to quaternary structure, monomer. It depends on Mg(2+) as a cofactor.

It is found in the cytoplasm. Its function is as follows. An essential GTPase which binds GTP, GDP and possibly (p)ppGpp with moderate affinity, with high nucleotide exchange rates and a fairly low GTP hydrolysis rate. Plays a role in control of the cell cycle, stress response, ribosome biogenesis and in those bacteria that undergo differentiation, in morphogenesis control. The polypeptide is GTPase Obg (Rickettsia akari (strain Hartford)).